The following is a 164-amino-acid chain: UPF0304 protein KPK_1463 (164 aa).

The protein belongs to the UPF0304 family.

The protein is UPF0304 protein KPK_1463 of Klebsiella pneumoniae (strain 342).